Reading from the N-terminus, the 79-residue chain is DNA-directed RNA polymerase subunit omega (79 aa).

It belongs to the RNA polymerase subunit omega family. In terms of assembly, the RNAP catalytic core consists of 2 alpha, 1 beta, 1 beta' and 1 omega subunit. When a sigma factor is associated with the core the holoenzyme is formed, which can initiate transcription.

The catalysed reaction is RNA(n) + a ribonucleoside 5'-triphosphate = RNA(n+1) + diphosphate. Its function is as follows. Promotes RNA polymerase assembly. Latches the N- and C-terminal regions of the beta' subunit thereby facilitating its interaction with the beta and alpha subunits. In Thermotoga maritima (strain ATCC 43589 / DSM 3109 / JCM 10099 / NBRC 100826 / MSB8), this protein is DNA-directed RNA polymerase subunit omega (rpoZ).